The chain runs to 1555 residues: Protein TASOR (1555 aa).

Disordered stretches follow at residues 1–74 (MEEN…DKRA), 645–711 (QKKK…RQET), 744–773 (QNSTEELPSQKLKNLSQAHDTEREGAGQDQ), 870–911 (ALPN…TTPS), and 1390–1462 (NQGD…PTLD). The span at 35–47 (VQQTLKRTNSTES) shows a compositional bias: polar residues. Positions 61–71 (RRFQIPRKSRD) are enriched in basic residues. The segment covering 667–688 (DRQSEKAWKHRKCEENVHHDNE) has biased composition (basic and acidic residues). Polar residues-rich tracts occupy residues 692–702 (SAQSLISSLGG) and 744–761 (QNSTEELPSQKLKNLSQA). Residues 888–904 (PLHETERQRPRHDRDYC) show a composition bias toward basic and acidic residues. Residues 1402–1417 (SKEEEDMSLDSEDDTP) show a composition bias toward acidic residues. Polar residues predominate over residues 1448 to 1458 (ESPSTLNQGKT).

This sequence belongs to the TASOR family. Component of the HUSH complex.

It localises to the nucleus. The protein resides in the chromosome. Functionally, component of the HUSH complex, a multiprotein complex that mediates epigenetic repression. The HUSH complex is recruited to genomic loci rich in H3K9me3 and is probably required to maintain transcriptional silencing by promoting further deposition of H3K9me3. The chain is Protein TASOR from Xenopus laevis (African clawed frog).